The sequence spans 198 residues: uncharacterized protein (198 aa).

The segment at 166–198 (GYEPDEKARKKRERVKRSEVEDQLKINVKPTRR) is disordered.

This is an uncharacterized protein from Coxiella burnetii (strain RSA 493 / Nine Mile phase I).